We begin with the raw amino-acid sequence, 473 residues long: Argininosuccinate lyase (473 aa).

Ala-2 is subject to N-acetylalanine. At Lys-7 the chain carries N6-acetyllysine. Position 27 (Ser-27) interacts with 2-(N(omega)-L-arginino)succinate. Lys-69 is subject to N6-acetyllysine. Positions 114 and 159 each coordinate 2-(N(omega)-L-arginino)succinate. The active-site Proton acceptor is the His-160. The active-site Proton donor is the Ser-281. Lys-288 bears the N6-acetyllysine mark. Asn-289, Tyr-321, Gln-326, and Lys-329 together coordinate 2-(N(omega)-L-arginino)succinate.

The protein belongs to the lyase 1 family. Argininosuccinate lyase subfamily. In terms of assembly, homotetramer. Forms tissue-specific complexes with ASS1, SLC7A1, HSP90AA1 and nitric oxide synthase NOS1, NOS2 or NOS3; the complex maintenance is independent of ASL catalytic function. In terms of processing, acetylation modifies enzyme activity in response to alterations of extracellular nutrient availability. Acetylation increased with trichostin A (TSA) or with nicotinamide (NAM). Glucose increases acetylation by about a factor of 3 with decreasing enzyme activity. Acetylation on Lys-288 is decreased on the addition of extra amino acids resulting in activation of enzyme activity.

It catalyses the reaction 2-(N(omega)-L-arginino)succinate = fumarate + L-arginine. Its pathway is amino-acid biosynthesis; L-arginine biosynthesis; L-arginine from L-ornithine and carbamoyl phosphate: step 3/3. It functions in the pathway nitrogen metabolism; urea cycle; L-arginine and fumarate from (N(omega)-L-arginino)succinate: step 1/1. Its activity is regulated as follows. Enzyme activity is regulated by acetylation. Its function is as follows. Catalyzes the reversible cleavage of L-argininosuccinate to fumarate and L-arginine, an intermediate step reaction in the urea cycle mostly providing for hepatic nitrogen detoxification into excretable urea as well as de novo L-arginine synthesis in nonhepatic tissues. Essential regulator of intracellular and extracellular L-arginine pools. As part of citrulline-nitric oxide cycle, forms tissue-specific multiprotein complexes with argininosuccinate synthase ASS1, transport protein SLC7A1 and nitric oxide synthase NOS1, NOS2 or NOS3, allowing for cell-autonomous L-arginine synthesis while channeling extracellular L-arginine to nitric oxide synthesis pathway. The sequence is that of Argininosuccinate lyase (ASL) from Bos taurus (Bovine).